A 307-amino-acid chain; its full sequence is Malonyl-[acyl-carrier protein] O-methyltransferase (307 aa).

Belongs to the methyltransferase superfamily.

It carries out the reaction malonyl-[ACP] + S-adenosyl-L-methionine = malonyl-[ACP] methyl ester + S-adenosyl-L-homocysteine. It functions in the pathway cofactor biosynthesis; biotin biosynthesis. Its function is as follows. Converts the free carboxyl group of a malonyl-thioester to its methyl ester by transfer of a methyl group from S-adenosyl-L-methionine (SAM). It allows to synthesize pimeloyl-ACP via the fatty acid synthetic pathway. This chain is Malonyl-[acyl-carrier protein] O-methyltransferase, found in Nitrosospira multiformis (strain ATCC 25196 / NCIMB 11849 / C 71).